The sequence spans 217 residues: Orotate phosphoribosyltransferase (217 aa).

A 5-phospho-alpha-D-ribose 1-diphosphate-binding site is contributed by Lys26. 34 to 35 (FF) is a binding site for orotate. 5-phospho-alpha-D-ribose 1-diphosphate is bound by residues 72-73 (YK), Arg99, Lys100, Lys103, His105, and 124-132 (DDVITAGTA). Orotate-binding residues include Thr128 and Arg156.

The protein belongs to the purine/pyrimidine phosphoribosyltransferase family. PyrE subfamily. Homodimer. The cofactor is Mg(2+).

It carries out the reaction orotidine 5'-phosphate + diphosphate = orotate + 5-phospho-alpha-D-ribose 1-diphosphate. Its pathway is pyrimidine metabolism; UMP biosynthesis via de novo pathway; UMP from orotate: step 1/2. Its function is as follows. Catalyzes the transfer of a ribosyl phosphate group from 5-phosphoribose 1-diphosphate to orotate, leading to the formation of orotidine monophosphate (OMP). The polypeptide is Orotate phosphoribosyltransferase (Aeromonas salmonicida (strain A449)).